A 386-amino-acid chain; its full sequence is Acetate kinase (386 aa).

Residue N9 coordinates Mg(2+). An ATP-binding site is contributed by K16. R74 contacts substrate. Catalysis depends on D131, which acts as the Proton donor/acceptor. Residues H191–G195, D265–R267, and G313–N317 each bind ATP. E367 lines the Mg(2+) pocket.

This sequence belongs to the acetokinase family. In terms of assembly, homodimer. Requires Mg(2+) as cofactor. Mn(2+) is required as a cofactor.

The protein localises to the cytoplasm. The enzyme catalyses acetate + ATP = acetyl phosphate + ADP. It participates in metabolic intermediate biosynthesis; acetyl-CoA biosynthesis; acetyl-CoA from acetate: step 1/2. Functionally, catalyzes the formation of acetyl phosphate from acetate and ATP. Can also catalyze the reverse reaction. The chain is Acetate kinase from Mycolicibacterium gilvum (strain PYR-GCK) (Mycobacterium gilvum (strain PYR-GCK)).